We begin with the raw amino-acid sequence, 220 residues long: Protein LURP-one-related 12 (220 aa).

This sequence belongs to the LOR family.

In terms of biological role, might be related to the phospholipid scramblase and tubby-like superfamily of membrane tethered transcription factors. This chain is Protein LURP-one-related 12, found in Arabidopsis thaliana (Mouse-ear cress).